Consider the following 151-residue polypeptide: MVASDEFRRVFGSFDQDGDGKISATELRLCVKASLGEDMPDEEVQALMALADTDGDGLLDEEEFVRLVTEMEADGDEEEDDDDETCRCLREAFAMYEMEGRGCITPLSLKLMLSKLGTHLDVAECQAMICRFDMNGDGVLTFDEFKTMMMA.

EF-hand domains follow at residues 2-37 (VASDEFRRVFGSFDQDGDGKISATELRLCVKASLGE), 39-74 (MPDEEVQALMALADTDGDGLLDEEEFVRLVTEMEAD), 84-119 (ETCRCLREAFAMYEMEGRGCITPLSLKLMLSKLGTH), and 120-151 (LDVAECQAMICRFDMNGDGVLTFDEFKTMMMA). The Ca(2+) site is built by D15, D17, D19, K21, E26, D52, D54, D56, and E63. The Ca(2+) site is built by D133, N135, D137, and E144.

Its function is as follows. Potential calcium sensor. In Oryza sativa subsp. japonica (Rice), this protein is Putative calcium-binding protein CML23 (CML23).